The sequence spans 697 residues: MMRPVVVKEKRVNESQIHVVEDEVRQAKTMDRDIVTHAMKQSIAKLNPKVMIKNPIMFVVEIGFIITFILSFLPSSSSSIPGWFNITVSLILLFTVLFANFAEALAEGRGKAQADSLKQSKKDVFANVVKENGDIVQVSATDLRKGDVVIVKQGEMIPSDGEVIKGLASVDESAITGESAPVIKEAGGDFCSVTGGTMVVSDEITIVITSNPGESFIDKMISLVEGAARQKTPNEIALNTVLTSLTLIFLIVVVTLPIFTNYLGFQIDTAVLVALLVCLIPTTIGGLLSAIGIAGMDRVTKFNVLAMSGKAVEAAGDINTIILDKTGTITFGNRMAHTLLPVGNETIEQVGKWAAISSVLDETPEGRSVIEYVQAKSISYNRELAEQGEFVPFKAETRMSGVDLRDGTKVRKGAVSSVIEWVQSQGGTIPKDVNQKADFISKEGGTPLVVAVNDHIYGLIYLKDTVKPGMRERFEQLRQMGIKTVMCTGDNPLTAATIAKEAGVDEFVAECKPEDKIAVIKAEQDKGKLVAMTGDGTNDAPALAQADVGLAMNSGTTAAKEAANMIDLDSNPTKIIEVVGIGKQLLMTRGALTTFSIANDVAKYFAIIPAMFTLAIPQMEALNIMKLTSPLSAILSALLFNAVIIPLLIPLAMKGIAYKPMSSNALLGRNLLIYGLGGVIVPFIGIKVIDIIVGLFI.

4 consecutive transmembrane segments (helical) span residues P55–S75, S79–A99, L245–F265, and V271–I291. The 4-aspartylphosphate intermediate role is filled by D324. ATP-binding positions include D361, E365, F393–S400, and K412. The Mg(2+) site is built by D535 and D539. The next 3 helical transmembrane spans lie at F605 to M625, A633 to M653, and G677 to I697.

Belongs to the cation transport ATPase (P-type) (TC 3.A.3) family. Type IA subfamily. In terms of assembly, the system is composed of three essential subunits: KdpA, KdpB and KdpC.

It is found in the cell membrane. It catalyses the reaction K(+)(out) + ATP + H2O = K(+)(in) + ADP + phosphate + H(+). Functionally, part of the high-affinity ATP-driven potassium transport (or Kdp) system, which catalyzes the hydrolysis of ATP coupled with the electrogenic transport of potassium into the cytoplasm. This subunit is responsible for energy coupling to the transport system and for the release of the potassium ions to the cytoplasm. The sequence is that of Potassium-transporting ATPase ATP-binding subunit from Bacillus cereus (strain ZK / E33L).